The chain runs to 100 residues: Small ribosomal subunit protein bS6 (100 aa).

It belongs to the bacterial ribosomal protein bS6 family.

In terms of biological role, binds together with bS18 to 16S ribosomal RNA. In Tropheryma whipplei (strain TW08/27) (Whipple's bacillus), this protein is Small ribosomal subunit protein bS6.